Consider the following 180-residue polypeptide: Small ribosomal subunit protein uS5 (180 aa).

The S5 DRBM domain occupies 13-76; the sequence is LEERVVQINR…EAAKKNLIRV (64 aa).

It belongs to the universal ribosomal protein uS5 family. Part of the 30S ribosomal subunit. Contacts proteins S4 and S8.

With S4 and S12 plays an important role in translational accuracy. Functionally, located at the back of the 30S subunit body where it stabilizes the conformation of the head with respect to the body. The protein is Small ribosomal subunit protein uS5 of Roseiflexus sp. (strain RS-1).